Here is an 87-residue protein sequence, read N- to C-terminus: Small ribosomal subunit protein bS21m (87 aa).

The protein belongs to the bacterial ribosomal protein bS21 family. In terms of assembly, component of the mitochondrial ribosome small subunit (28S) which comprises a 12S rRNA and about 30 distinct proteins.

Its subcellular location is the mitochondrion. The chain is Small ribosomal subunit protein bS21m (Mrps21) from Mus musculus (Mouse).